A 230-amino-acid polypeptide reads, in one-letter code: Nicotinamide riboside kinase 2 (230 aa).

9–17 (GMTNGGKTT) contributes to the ATP binding site. Residues Thr-16 and Asp-35 each contribute to the Mg(2+) site. Catalysis depends on Asp-35, which acts as the Proton acceptor. Residues 35–38 (DDFF) and 54–55 (WD) each bind substrate. Position 130 (Arg-130) interacts with ATP. Residues Arg-131 and 136 to 137 (YT) each bind substrate. ATP is bound by residues 134-136 (RNY) and 174-176 (KSR). The tract at residues 191–230 (LLNRSQESAPSPARPARTQGPGRGCGHRTARPAASQQDSM) is disordered.

This sequence belongs to the uridine kinase family. NRK subfamily. As to quaternary structure, monomer. Interacts with ITGB1 alone or when associated with alpha-7, but not with alpha-5. In terms of tissue distribution, predominantly expressed in skeletal muscle and, at a much lower level, in the heart (at protein level). No expression in brain, kidney, liver, lung, pancreas nor placenta.

The enzyme catalyses beta-nicotinamide D-riboside + ATP = beta-nicotinamide D-ribonucleotide + ADP + H(+). It carries out the reaction beta-D-ribosylnicotinate + ATP = nicotinate beta-D-ribonucleotide + ADP + H(+). The protein operates within cofactor biosynthesis; NAD(+) biosynthesis. In terms of biological role, catalyzes the phosphorylation of nicotinamide riboside (NR) and nicotinic acid riboside (NaR) to form nicotinamide mononucleotide (NMN) and nicotinic acid mononucleotide (NaMN). Reduces laminin matrix deposition and cell adhesion to laminin, but not to fibronectin. Involved in the regulation of PXN at the protein level and of PXN tyrosine phosphorylation. May play a role in the regulation of terminal myogenesis. The protein is Nicotinamide riboside kinase 2 (NMRK2) of Homo sapiens (Human).